A 164-amino-acid polypeptide reads, in one-letter code: Putative 4-hydroxy-4-methyl-2-oxoglutarate aldolase (164 aa).

Substrate is bound by residues 74–77 (GGNL) and Arg96. A divalent metal cation is bound at residue Asp97.

It belongs to the class II aldolase/RraA-like family. In terms of assembly, homotrimer. A divalent metal cation serves as cofactor.

It carries out the reaction 4-hydroxy-4-methyl-2-oxoglutarate = 2 pyruvate. The enzyme catalyses oxaloacetate + H(+) = pyruvate + CO2. In terms of biological role, catalyzes the aldol cleavage of 4-hydroxy-4-methyl-2-oxoglutarate (HMG) into 2 molecules of pyruvate. Also contains a secondary oxaloacetate (OAA) decarboxylase activity due to the common pyruvate enolate transition state formed following C-C bond cleavage in the retro-aldol and decarboxylation reactions. In Thermus thermophilus (strain ATCC BAA-163 / DSM 7039 / HB27), this protein is Putative 4-hydroxy-4-methyl-2-oxoglutarate aldolase.